Reading from the N-terminus, the 97-residue chain is U-scoloptoxin(10)-Ssd2a (97 aa).

A signal peptide spans 1-23 (MNKSMLIFFTILFLTYIIEEKEA).

In terms of processing, contains 3 disulfide bonds. Expressed by the venom gland.

It is found in the secreted. This chain is U-scoloptoxin(10)-Ssd2a, found in Scolopendra dehaani (Thai centipede).